We begin with the raw amino-acid sequence, 220 residues long: Ribosomal RNA small subunit methyltransferase G (220 aa).

Residues glycine 78, leucine 83, and arginine 144 each coordinate S-adenosyl-L-methionine.

The protein belongs to the methyltransferase superfamily. RNA methyltransferase RsmG family.

It localises to the cytoplasm. The enzyme catalyses guanosine(527) in 16S rRNA + S-adenosyl-L-methionine = N(7)-methylguanosine(527) in 16S rRNA + S-adenosyl-L-homocysteine. Its function is as follows. Specifically methylates the N7 position of guanine in position 527 of 16S rRNA. In Alkalilimnicola ehrlichii (strain ATCC BAA-1101 / DSM 17681 / MLHE-1), this protein is Ribosomal RNA small subunit methyltransferase G.